A 281-amino-acid chain; its full sequence is ATP synthase gamma chain (281 aa).

Belongs to the ATPase gamma chain family. In terms of assembly, F-type ATPases have 2 components, CF(1) - the catalytic core - and CF(0) - the membrane proton channel. CF(1) has five subunits: alpha(3), beta(3), gamma(1), delta(1), epsilon(1). CF(0) has three main subunits: a, b and c.

It localises to the cell inner membrane. Produces ATP from ADP in the presence of a proton gradient across the membrane. The gamma chain is believed to be important in regulating ATPase activity and the flow of protons through the CF(0) complex. This is ATP synthase gamma chain from Ehrlichia chaffeensis (strain ATCC CRL-10679 / Arkansas).